Consider the following 627-residue polypeptide: Protein fem-1 homolog B (627 aa).

ANK repeat units lie at residues 45–74, 87–116, 120–149, and 153–182; these read QRSTPLIIAARNGHAKVVRLLLEHYRVQTQ, DGATALWCAAGAGHFEVVKLLVSHGANVNH, TNSTPLRAACFDGRLDIVKYLVENNANISI, and YDNTCLMIAAYKGHTDVVRYLLEQRADPNA. Residues H185, C186, and H218 each contribute to the Zn(2+) site. ANK repeat units follow at residues 186 to 215 and 218 to 248; these read CGATALHFAAEAGHIDIVKELIKWRAAIVV and HGMTPLKVAAESCKADVVELLLSHADCDRRS. The stretch at 344–377 is one TPR repeat; it reads SHPIIYRGAVYADNMEFEQCIKLWLHALHLRQKG. 2 ANK repeats span residues 483–527 and 531–568; these read EGFT…EVNA and EGNSALHIIVQYNRPISDFLTLHSIIISLVEAGAHTDM.

Belongs to the fem-1 family. As to quaternary structure, component of a CRL2 E3 ubiquitin-protein ligase complex, also named ECS (Elongin BC-CUL2/5-SOCS-box protein) complex, composed of CUL2, Elongin BC (ELOB and ELOC), RBX1 and substrate-specific adapter FEM1B. Homooligomer. Interacts with PPM1F and PHTF1. Interacts with the death domain of FAS/TNFRSF6 and TNFRSF1A. Interacts with CHEK1. Interacts with NKX3-1. As to expression, present in adult testis (at protein level).

The protein resides in the cytoplasm. It localises to the nucleus. It participates in protein modification; protein ubiquitination. Activity of the CRL2(FEM1B) complex toward FNIP1 is inhibited by BEX family proteins (BEX1, BEX2, BEX3 and/or BEX4) in absence of reductive stress. Mechanistically, BEX proteins act as pseudosubstrate inhibitors that associate with FEM1B via zinc in absence of reductive stress, thereby preventing association between FEM1B and FNIP1. In terms of biological role, substrate-recognition component of a Cul2-RING (CRL2) E3 ubiquitin-protein ligase complex of the DesCEND (destruction via C-end degrons) pathway, which recognizes a C-degron located at the extreme C terminus of target proteins, leading to their ubiquitination and degradation. The C-degron recognized by the DesCEND pathway is usually a motif of less than ten residues and can be present in full-length proteins, truncated proteins or proteolytically cleaved forms. The CRL2(FEM1B) complex specifically recognizes proteins ending with -Gly-Leu-Asp-Arg, such as CDK5R1, leading to their ubiquitination and degradation. Also acts as a regulator of the reductive stress response by mediating ubiquitination of reduced FNIP1: in response to reductive stress, the CRL2(FEM1B) complex specifically recognizes a conserved Cys degron in FNIP1 when this degron is reduced, leading to FNIP1 degradation and subsequent activation of mitochondria to recalibrate reactive oxygen species (ROS). Mechanistically, recognizes and binds reduced FNIP1 through two interface zinc ions, which act as a molecular glue that recruit reduced FNIP1 to FEM1B. Promotes ubiquitination of GLI1, suppressing GLI1 transcriptional activator activity. Promotes ubiquitination and degradation of ANKRD37. Promotes ubiquitination and degradation of SLBP. Involved in apoptosis by acting as a death receptor-associated protein that mediates apoptosis. Also involved in glucose homeostasis in pancreatic islet. May also act as an adapter/mediator in replication stress-induced signaling that leads to the activation of CHEK1. The chain is Protein fem-1 homolog B from Rattus norvegicus (Rat).